The sequence spans 479 residues: Aspartyl/glutamyl-tRNA(Asn/Gln) amidotransferase subunit B (479 aa).

This sequence belongs to the GatB/GatE family. GatB subfamily. Heterotrimer of A, B and C subunits.

The catalysed reaction is L-glutamyl-tRNA(Gln) + L-glutamine + ATP + H2O = L-glutaminyl-tRNA(Gln) + L-glutamate + ADP + phosphate + H(+). It catalyses the reaction L-aspartyl-tRNA(Asn) + L-glutamine + ATP + H2O = L-asparaginyl-tRNA(Asn) + L-glutamate + ADP + phosphate + 2 H(+). In terms of biological role, allows the formation of correctly charged Asn-tRNA(Asn) or Gln-tRNA(Gln) through the transamidation of misacylated Asp-tRNA(Asn) or Glu-tRNA(Gln) in organisms which lack either or both of asparaginyl-tRNA or glutaminyl-tRNA synthetases. The reaction takes place in the presence of glutamine and ATP through an activated phospho-Asp-tRNA(Asn) or phospho-Glu-tRNA(Gln). The protein is Aspartyl/glutamyl-tRNA(Asn/Gln) amidotransferase subunit B of Streptococcus equi subsp. zooepidemicus (strain MGCS10565).